We begin with the raw amino-acid sequence, 320 residues long: Holliday junction branch migration complex subunit RuvB (320 aa).

The interval 1–172 (MTANVCLDES…FGIISRLEYY (172 aa)) is large ATPase domain (RuvB-L). ATP is bound by residues Arg-12, Gly-53, Lys-56, Thr-57, Thr-58, 119–121 (EDF), Arg-162, Tyr-172, and Arg-209. Thr-57 contributes to the Mg(2+) binding site. The small ATPAse domain (RuvB-S) stretch occupies residues 173–243 (TPADLARIVA…LASEALGRME (71 aa)). The segment at 246–320 (ESGLDQMDRK…KAYRHLNLLG (75 aa)) is head domain (RuvB-H). DNA-binding residues include Arg-301 and Arg-306.

It belongs to the RuvB family. In terms of assembly, homohexamer. Forms an RuvA(8)-RuvB(12)-Holliday junction (HJ) complex. HJ DNA is sandwiched between 2 RuvA tetramers; dsDNA enters through RuvA and exits via RuvB. An RuvB hexamer assembles on each DNA strand where it exits the tetramer. Each RuvB hexamer is contacted by two RuvA subunits (via domain III) on 2 adjacent RuvB subunits; this complex drives branch migration. In the full resolvosome a probable DNA-RuvA(4)-RuvB(12)-RuvC(2) complex forms which resolves the HJ.

The protein resides in the cytoplasm. The enzyme catalyses ATP + H2O = ADP + phosphate + H(+). The RuvA-RuvB-RuvC complex processes Holliday junction (HJ) DNA during genetic recombination and DNA repair, while the RuvA-RuvB complex plays an important role in the rescue of blocked DNA replication forks via replication fork reversal (RFR). RuvA specifically binds to HJ cruciform DNA, conferring on it an open structure. The RuvB hexamer acts as an ATP-dependent pump, pulling dsDNA into and through the RuvAB complex. RuvB forms 2 homohexamers on either side of HJ DNA bound by 1 or 2 RuvA tetramers; 4 subunits per hexamer contact DNA at a time. Coordinated motions by a converter formed by DNA-disengaged RuvB subunits stimulates ATP hydrolysis and nucleotide exchange. Immobilization of the converter enables RuvB to convert the ATP-contained energy into a lever motion, pulling 2 nucleotides of DNA out of the RuvA tetramer per ATP hydrolyzed, thus driving DNA branch migration. The RuvB motors rotate together with the DNA substrate, which together with the progressing nucleotide cycle form the mechanistic basis for DNA recombination by continuous HJ branch migration. Branch migration allows RuvC to scan DNA until it finds its consensus sequence, where it cleaves and resolves cruciform DNA. In Nitratidesulfovibrio vulgaris (strain ATCC 29579 / DSM 644 / CCUG 34227 / NCIMB 8303 / VKM B-1760 / Hildenborough) (Desulfovibrio vulgaris), this protein is Holliday junction branch migration complex subunit RuvB.